An 85-amino-acid polypeptide reads, in one-letter code: Beta-insect depressant toxin Lqh-dprIT3d (85 aa).

An N-terminal signal peptide occupies residues 1–21 (MKLLLLLTISASMLIEGLVNA). The LCN-type CS-alpha/beta domain maps to 22 to 82 (DGYIRGGDGC…EWDYETNTCG (61 aa)). 4 disulfide bridges follow: Cys31–Cys81, Cys35–Cys56, Cys42–Cys63, and Cys46–Cys65. At Gly82 the chain carries Glycine amide.

This sequence belongs to the long (4 C-C) scorpion toxin superfamily. Sodium channel inhibitor family. Beta subfamily. Expressed by the venom gland.

It is found in the secreted. Functionally, depressant insect beta-toxins cause a transient contraction paralysis followed by a slow flaccid paralysis. They bind voltage-independently at site-4 of sodium channels (Nav) and block action potentials, primarily by depolarizing the axonal membrane and suppressing the sodium current. This depressant toxin is active only on insects. It is found in a relatively small amount in the venom, and its activity on insects is 10-fold higher compared to other known depressant toxins. This is Beta-insect depressant toxin Lqh-dprIT3d from Leiurus hebraeus (Hebrew deathstalker scorpion).